A 451-amino-acid polypeptide reads, in one-letter code: Tubulin alpha chain (451 aa).

Residue Gln11 participates in GTP binding. Residue Lys40 is modified to N6-acetyllysine. GTP contacts are provided by Glu71, Gly144, Thr145, Thr179, Asn206, and Asn228. Position 71 (Glu71) interacts with Mg(2+). Residue Glu254 is part of the active site. The disordered stretch occupies residues 432–451; the sequence is YEEVGAESAEGDDEDEGEDY.

The protein belongs to the tubulin family. Dimer of alpha and beta chains. A typical microtubule is a hollow water-filled tube with an outer diameter of 25 nm and an inner diameter of 15 nM. Alpha-beta heterodimers associate head-to-tail to form protofilaments running lengthwise along the microtubule wall with the beta-tubulin subunit facing the microtubule plus end conferring a structural polarity. Microtubules usually have 13 protofilaments but different protofilament numbers can be found in some organisms and specialized cells. It depends on Mg(2+) as a cofactor. In terms of processing, undergoes a tyrosination/detyrosination cycle, the cyclic removal and re-addition of a C-terminal tyrosine residue by the enzymes tubulin tyrosine carboxypeptidase (TTCP) and tubulin tyrosine ligase (TTL), respectively. Acetylation of alpha chains at Lys-40 stabilizes microtubules and affects affinity and processivity of microtubule motors. This modification has a role in multiple cellular functions, ranging from cell motility, cell cycle progression or cell differentiation to intracellular trafficking and signaling.

The protein resides in the cytoplasm. The protein localises to the cytoskeleton. The catalysed reaction is GTP + H2O = GDP + phosphate + H(+). Its function is as follows. Tubulin is the major constituent of microtubules, a cylinder consisting of laterally associated linear protofilaments composed of alpha- and beta-tubulin heterodimers. Microtubules grow by the addition of GTP-tubulin dimers to the microtubule end, where a stabilizing cap forms. Below the cap, tubulin dimers are in GDP-bound state, owing to GTPase activity of alpha-tubulin. This Daucus carota (Wild carrot) protein is Tubulin alpha chain (TBA).